Here is a 211-residue protein sequence, read N- to C-terminus: Mitotic spindle assembly checkpoint protein MAD2B (211 aa).

Residues 13–203 form the HORMA domain; that stretch reads QVVADILCEF…SDILKMQLYV (191 aa).

As to quaternary structure, homooligomer. Interacts with rev1. Interacts with rev3l. Interacts with fzr1 (in complex with the anaphase promoting complex APC). May interact with cdc20.

Its subcellular location is the nucleus. The protein resides in the cytoplasm. It localises to the cytoskeleton. It is found in the spindle. Functionally, adapter protein able to interact with different proteins and involved in different biological processes. Mediates the interaction between the error-prone DNA polymerase zeta catalytic subunit rev3l and the inserter polymerase rev1, thereby mediating the second polymerase switching in translesion DNA synthesis. Translesion DNA synthesis releases the replication blockade of replicative polymerases, stalled in presence of DNA lesions. May also play a role in signal transduction in response to DNA damage. May regulate the activation of the anaphase promoting complex APC thereby regulating progression through the cell cycle. Through transcriptional regulation may play a role in epithelial-mesenchymal transdifferentiation. The polypeptide is Mitotic spindle assembly checkpoint protein MAD2B (mad2l2) (Danio rerio (Zebrafish)).